The following is a 285-amino-acid chain: Prephenate dehydratase (285 aa).

A Prephenate dehydratase domain is found at 2 to 183 (KVGYLGPAAT…NHTRFVILSP (182 aa)). The region spanning 204-281 (MVMLPQDDQS…CKVRLLGAYQ (78 aa)) is the ACT domain.

The catalysed reaction is prephenate + H(+) = 3-phenylpyruvate + CO2 + H2O. The protein operates within amino-acid biosynthesis; L-phenylalanine biosynthesis; phenylpyruvate from prephenate: step 1/1. This Bacillus subtilis (strain 168) protein is Prephenate dehydratase (pheA).